We begin with the raw amino-acid sequence, 187 residues long: Nuclear transcription factor Y subunit C-8 (187 aa).

The segment at 163–187 (WPGAWTSVSGEEEEARGKKGGDDGN) is disordered. Residues 177–187 (ARGKKGGDDGN) show a composition bias toward basic and acidic residues.

It belongs to the NFYC/HAP5 subunit family. In terms of assembly, heterotrimeric transcription factor composed of three components, NF-YA, NF-YB and NF-YC. NF-YB and NF-YC must interact and dimerize for NF-YA association and DNA binding. Expressed in flowers and siliques.

The protein resides in the nucleus. In terms of biological role, stimulates the transcription of various genes by recognizing and binding to a CCAAT motif in promoters. This Arabidopsis thaliana (Mouse-ear cress) protein is Nuclear transcription factor Y subunit C-8 (NFYC8).